The following is a 251-amino-acid chain: POU class 2 homeobox associating factor 3 (251 aa).

The 23-residue stretch at Pro-5 to His-27 folds into the OCA domain. Residues Arg-24–Asp-45 are disordered. Low complexity predominate over residues Ser-31–Ser-40.

This sequence belongs to the POU2AF family. Interacts with POU2F3 in a DNA-dependent manner; this interaction increases POU2F3 transactivation activity. As to expression, expressed in many cell types of epithelial, mesenchymal and hematopoietic origins. Expressed in tufs cells.

It is found in the cytoplasm. Its subcellular location is the nucleus. Functionally, transcriptional coactivator that specifically associates with POU2F3. This complex drives the development of tuft cells, a rare a rare chemosensory cells that coordinate immune and neural functions within mucosal epithelial tissues. The protein is POU class 2 homeobox associating factor 3 of Homo sapiens (Human).